We begin with the raw amino-acid sequence, 388 residues long: Succinate--CoA ligase [ADP-forming] subunit beta (388 aa).

The 236-residue stretch at Lys9–His244 folds into the ATP-grasp domain. ATP contacts are provided by residues Lys46, Gly53–Gly55, Glu99, Thr102, and Glu107. The Mg(2+) site is built by Asn199 and Asp213. Residues Asn264 and Gly321–Val323 each bind substrate.

It belongs to the succinate/malate CoA ligase beta subunit family. As to quaternary structure, heterotetramer of two alpha and two beta subunits. Requires Mg(2+) as cofactor.

The catalysed reaction is succinate + ATP + CoA = succinyl-CoA + ADP + phosphate. It carries out the reaction GTP + succinate + CoA = succinyl-CoA + GDP + phosphate. It participates in carbohydrate metabolism; tricarboxylic acid cycle; succinate from succinyl-CoA (ligase route): step 1/1. Succinyl-CoA synthetase functions in the citric acid cycle (TCA), coupling the hydrolysis of succinyl-CoA to the synthesis of either ATP or GTP and thus represents the only step of substrate-level phosphorylation in the TCA. The beta subunit provides nucleotide specificity of the enzyme and binds the substrate succinate, while the binding sites for coenzyme A and phosphate are found in the alpha subunit. In Alteromonas mediterranea (strain DSM 17117 / CIP 110805 / LMG 28347 / Deep ecotype), this protein is Succinate--CoA ligase [ADP-forming] subunit beta.